Here is a 159-residue protein sequence, read N- to C-terminus: Ribosome maturation factor RimP (159 aa).

It belongs to the RimP family.

Its subcellular location is the cytoplasm. In terms of biological role, required for maturation of 30S ribosomal subunits. The sequence is that of Ribosome maturation factor RimP from Geobacter metallireducens (strain ATCC 53774 / DSM 7210 / GS-15).